The chain runs to 185 residues: MLQKRGRGLLVLLLMLLEWTRPGLLSPLRPICDLRVLNHFIKEARDAEVAMKSCTEGCSLSESVTVPQTRVDFDVWEKKNGLEQAQEVQSGLWLLQQALNLLRTSVTNTALHSHIDNSIRNLLSINAVLRSLNIQEYTPPASTVALEGTWRVSSATDLLQVHVNFLRGKVRLLLLDAQACQQDVS.

Positions 1–22 (MLQKRGRGLLVLLLMLLEWTRP) are cleaved as a signal peptide. Disulfide bonds link C32/C180 and C54/C58.

Belongs to the EPO/TPO family.

The protein localises to the secreted. Functionally, erythropoietin is the principal hormone involved in the regulation of erythrocyte differentiation and the maintenance of a physiological level of circulating erythrocyte mass. The sequence is that of Erythropoietin (epo) from Epinephelus coioides (Orange-spotted grouper).